The chain runs to 508 residues: Photosystem II CP47 reaction center protein (508 aa).

The next 6 helical transmembrane spans lie at alanine 21–serine 36, isoleucine 101–tryptophan 115, glycine 140–phenylalanine 156, isoleucine 203–serine 218, valine 237–valine 252, and serine 457–arginine 472.

This sequence belongs to the PsbB/PsbC family. PsbB subfamily. In terms of assembly, PSII is composed of 1 copy each of membrane proteins PsbA, PsbB, PsbC, PsbD, PsbE, PsbF, PsbH, PsbI, PsbJ, PsbK, PsbL, PsbM, PsbT, PsbX, PsbY, PsbZ, Psb30/Ycf12, at least 3 peripheral proteins of the oxygen-evolving complex and a large number of cofactors. It forms dimeric complexes. Binds multiple chlorophylls. PSII binds additional chlorophylls, carotenoids and specific lipids. serves as cofactor.

Its subcellular location is the plastid. The protein localises to the chloroplast thylakoid membrane. Its function is as follows. One of the components of the core complex of photosystem II (PSII). It binds chlorophyll and helps catalyze the primary light-induced photochemical processes of PSII. PSII is a light-driven water:plastoquinone oxidoreductase, using light energy to abstract electrons from H(2)O, generating O(2) and a proton gradient subsequently used for ATP formation. In Trachelium caeruleum (Blue throatwort), this protein is Photosystem II CP47 reaction center protein.